Reading from the N-terminus, the 110-residue chain is Auxin-responsive protein SAUR71 (110 aa).

Belongs to the ARG7 family. In terms of tissue distribution, highly expressed in the steles of roots and hypocotyls.

The protein localises to the cytoplasm. In terms of biological role, plays a role in the regulation of cell expansion, root meristem patterning and auxin transport. The polypeptide is Auxin-responsive protein SAUR71 (Arabidopsis thaliana (Mouse-ear cress)).